Consider the following 443-residue polypeptide: Glutamine synthetase (443 aa).

The GS beta-grasp domain maps to Val-11–Glu-97. The GS catalytic domain occupies Pro-103–Val-443. 2 residues coordinate Mg(2+): Glu-126 and Glu-128. Glu-176 serves as a coordination point for ATP. Residues Glu-181 and Glu-188 each contribute to the Mg(2+) site. L-glutamate is bound at residue Gly-233. His-237 serves as a coordination point for Mg(2+). ATP-binding positions include His-239–Ser-241 and Ser-241. Residues Arg-287, Glu-293, and Arg-305 each coordinate L-glutamate. 2 residues coordinate ATP: Arg-305 and Arg-310. A Mg(2+)-binding site is contributed by Glu-322. Arg-324 is a binding site for L-glutamate.

This sequence belongs to the glutamine synthetase family. Oligomer of 12 subunits arranged in the form of two hexagons. Mg(2+) serves as cofactor. The cofactor is Mn(2+).

The protein resides in the cytoplasm. It carries out the reaction L-glutamate + NH4(+) + ATP = L-glutamine + ADP + phosphate + H(+). The catalysed reaction is hydroxylamine + L-glutamate + ATP = L-glutamine hydroxamate + ADP + phosphate. The activity of this enzyme is not controlled by adenylation. Carries out the ATP-dependent synthesis of glutamine from ammonium nitrogen and glutamate. Exhibits both L-gamma-glutamylhydroxamate synthetase and gamma-glutamyltransferase activities when using hydroxylamine as substrate; in fact, the enzyme possesses low biosynthetic activity, suggesting that the reaction is biased towards the degradation of glutamine under ammonia-rich conditions. Might play some role in ammonia assimilation under ammonia-starvation conditions. Can also use GTP instead of ATP in the synthetase reaction, but not CTP or UTP. The polypeptide is Glutamine synthetase (Thermococcus kodakarensis (strain ATCC BAA-918 / JCM 12380 / KOD1) (Pyrococcus kodakaraensis (strain KOD1))).